The following is a 312-amino-acid chain: Dihydroorotate dehydrogenase B (NAD(+)), catalytic subunit (312 aa).

FMN is bound by residues Ser23 and 47-48 (KA). Substrate is bound by residues Lys47 and 71-75 (NAIGL). FMN-binding residues include Asn103 and Asn131. Asn131 contributes to the substrate binding site. Cys134 (nucleophile) is an active-site residue. Positions 171 and 197 each coordinate FMN. 198-199 (NT) contacts substrate. Residues Gly223, 249 to 250 (GG), and 271 to 272 (GT) each bind FMN.

The protein belongs to the dihydroorotate dehydrogenase family. Type 1 subfamily. Heterotetramer of 2 PyrK and 2 PyrD type B subunits. It depends on FMN as a cofactor.

The protein localises to the cytoplasm. The enzyme catalyses (S)-dihydroorotate + NAD(+) = orotate + NADH + H(+). It participates in pyrimidine metabolism; UMP biosynthesis via de novo pathway; orotate from (S)-dihydroorotate (NAD(+) route): step 1/1. Its function is as follows. Catalyzes the conversion of dihydroorotate to orotate with NAD(+) as electron acceptor. The polypeptide is Dihydroorotate dehydrogenase B (NAD(+)), catalytic subunit (pyrDB) (Streptococcus pneumoniae (strain ATCC BAA-255 / R6)).